The chain runs to 137 residues: Ribosome-binding factor A (137 aa).

The protein belongs to the RbfA family. In terms of assembly, monomer. Binds 30S ribosomal subunits, but not 50S ribosomal subunits or 70S ribosomes.

It localises to the cytoplasm. In terms of biological role, one of several proteins that assist in the late maturation steps of the functional core of the 30S ribosomal subunit. Associates with free 30S ribosomal subunits (but not with 30S subunits that are part of 70S ribosomes or polysomes). Required for efficient processing of 16S rRNA. May interact with the 5'-terminal helix region of 16S rRNA. This Nitrobacter winogradskyi (strain ATCC 25391 / DSM 10237 / CIP 104748 / NCIMB 11846 / Nb-255) protein is Ribosome-binding factor A.